Here is a 523-residue protein sequence, read N- to C-terminus: UvrABC system protein C (523 aa).

Residues 15–93 enclose the GIY-YIG domain; the sequence is HLPGCYLFKD…IKKHWPRYNI (79 aa). The UVR domain maps to 197–232; that stretch reads RELIESMETEMKEMAAKQMFEQAMELRDEIAALEYL.

This sequence belongs to the UvrC family. In terms of assembly, interacts with UvrB in an incision complex.

Its subcellular location is the cytoplasm. In terms of biological role, the UvrABC repair system catalyzes the recognition and processing of DNA lesions. UvrC both incises the 5' and 3' sides of the lesion. The N-terminal half is responsible for the 3' incision and the C-terminal half is responsible for the 5' incision. In Methanosarcina mazei (strain ATCC BAA-159 / DSM 3647 / Goe1 / Go1 / JCM 11833 / OCM 88) (Methanosarcina frisia), this protein is UvrABC system protein C.